Here is a 347-residue protein sequence, read N- to C-terminus: D-alanine--D-alanine ligase (347 aa).

In terms of domain architecture, ATP-grasp spans 131–333 (KRVLESAGIA…YPELIERLVD (203 aa)). An ATP-binding site is contributed by 161-216 (EEKLAYPVFTKPSNMGSSVGISKSENQEELRQALKLAFRYDSRVLVEQGVNAREIE). Mg(2+)-binding residues include D287, E300, and N302.

It belongs to the D-alanine--D-alanine ligase family. Mg(2+) serves as cofactor. It depends on Mn(2+) as a cofactor.

Its subcellular location is the cytoplasm. The catalysed reaction is 2 D-alanine + ATP = D-alanyl-D-alanine + ADP + phosphate + H(+). Its pathway is cell wall biogenesis; peptidoglycan biosynthesis. In terms of biological role, cell wall formation. This Streptococcus pneumoniae (strain ATCC BAA-255 / R6) protein is D-alanine--D-alanine ligase.